The following is a 392-amino-acid chain: 5-amino-6-(D-ribitylamino)uracil--L-tyrosine 4-hydroxyphenyl transferase (392 aa).

The 248-residue stretch at 60–307 folds into the Radical SAM core domain; it reads VTYVVNRNIN…MAIARLYLGK (248 aa). The [4Fe-4S] cluster site is built by Cys-74, Cys-78, and Cys-81.

It belongs to the radical SAM superfamily. CofH family. Consists of two subunits, CofG and CofH. [4Fe-4S] cluster is required as a cofactor.

It carries out the reaction 5-amino-6-(D-ribitylamino)uracil + L-tyrosine + S-adenosyl-L-methionine = 5-amino-5-(4-hydroxybenzyl)-6-(D-ribitylimino)-5,6-dihydrouracil + 2-iminoacetate + 5'-deoxyadenosine + L-methionine + H(+). It functions in the pathway cofactor biosynthesis; coenzyme F0 biosynthesis. Its function is as follows. Catalyzes the radical-mediated synthesis of 5-amino-5-(4-hydroxybenzyl)-6-(D-ribitylimino)-5,6-dihydrouracil from 5-amino-6-(D-ribitylamino)uracil and L-tyrosine. In Synechocystis sp. (strain ATCC 27184 / PCC 6803 / Kazusa), this protein is 5-amino-6-(D-ribitylamino)uracil--L-tyrosine 4-hydroxyphenyl transferase.